We begin with the raw amino-acid sequence, 453 residues long: Phosphoglucosamine mutase (453 aa).

The Phosphoserine intermediate role is filled by S105. Positions 105, 244, 246, and 248 each coordinate Mg(2+). A Phosphoserine modification is found at S105.

It belongs to the phosphohexose mutase family. The cofactor is Mg(2+). Post-translationally, activated by phosphorylation.

It carries out the reaction alpha-D-glucosamine 1-phosphate = D-glucosamine 6-phosphate. Functionally, catalyzes the conversion of glucosamine-6-phosphate to glucosamine-1-phosphate. In Blochmanniella pennsylvanica (strain BPEN), this protein is Phosphoglucosamine mutase.